The sequence spans 257 residues: UPF0246 protein PC1_3665 (257 aa).

Belongs to the UPF0246 family.

The chain is UPF0246 protein PC1_3665 from Pectobacterium carotovorum subsp. carotovorum (strain PC1).